Reading from the N-terminus, the 556-residue chain is Cell wall integrity and stress response component 3 (556 aa).

The signal sequence occupies residues 1–38; the sequence is MERVWFAKLTNKGTIKIGYISFILLSLLCQSLIGLVNA. The region spanning 39-132 is the WSC domain; sequence DFNYEGCYSA…SSYMNVYVNA (94 aa). At 39-384 the chain is on the extracellular side; sequence DFNYEGCYSA…QRLSGGAIAG (346 aa). N-linked (GlcNAc...) asparagine glycosylation is present at asparagine 84. Low complexity-rich tracts occupy residues 142–169 and 184–257; these read SSSK…SSTT and TTVS…STTS. 2 disordered regions span residues 142–257 and 269–312; these read SSSK…STTS and TLSS…PSTS. Asparagine 367 and asparagine 370 each carry an N-linked (GlcNAc...) asparagine glycan. Residues 385–405 traverse the membrane as a helical segment; that stretch reads IVIGVVFGVIFIILILLFLIW. The Cytoplasmic portion of the chain corresponds to 406–556; that stretch reads RRRKSHDQLD…LSSTVSHNRA (151 aa). 2 disordered regions span residues 425–444 and 534–556; these read YSFG…SGTT and LQVV…HNRA. Polar residues predominate over residues 546-556; it reads ELSSTVSHNRA.

The protein localises to the membrane. In Saccharomyces cerevisiae (strain ATCC 204508 / S288c) (Baker's yeast), this protein is Cell wall integrity and stress response component 3 (WSC3).